The primary structure comprises 398 residues: Trans-2-enoyl-CoA reductase [NADH] (398 aa).

Residues 47–52, 74–75, 111–112, and 139–140 each bind NAD(+); these read GASSGF, FE, DA, and LA. Position 225 (Y225) interacts with substrate. The active-site Proton donor is the Y235. Residues K244 and 274–276 contribute to the NAD(+) site; that span reads IVT.

The protein belongs to the TER reductase family. In terms of assembly, monomer.

The enzyme catalyses a 2,3-saturated acyl-CoA + NAD(+) = a (2E)-enoyl-CoA + NADH + H(+). Its pathway is lipid metabolism; fatty acid biosynthesis. Functionally, involved in the fatty acid synthesis (FAS II). Catalyzes the reduction of a carbon-carbon double bond in an enoyl moiety that is covalently linked to a coenzyme A (CoA). This is Trans-2-enoyl-CoA reductase [NADH] from Clostridium beijerinckii (strain ATCC 51743 / NCIMB 8052) (Clostridium acetobutylicum).